A 218-amino-acid chain; its full sequence is UPF0319 protein PM0395 (218 aa).

The N-terminal stretch at 1-21 is a signal peptide; it reads MKFRFAALASVALLTSTVSVA.

Belongs to the UPF0319 family.

The chain is UPF0319 protein PM0395 from Pasteurella multocida (strain Pm70).